Reading from the N-terminus, the 403-residue chain is Ubiquitin-like modifier-activating enzyme 5 (403 aa).

ATP is bound by residues Gly-81, Asp-102, Lys-125, Asn-148, and Asn-182. Residues Cys-224 and Cys-227 each coordinate Zn(2+). The Glycyl thioester intermediate role is filled by Cys-248. Zn(2+)-binding residues include Cys-301 and Cys-306. Residues 306–315 (CRKQQEEYKK) show a composition bias toward basic and acidic residues. Residues 306-337 (CRKQQEEYKKRAPAQPTQETAPQEEEEVVHED) are disordered. The short motif at 333–345 (VVHEDNEWGIELV) is the UFM1-interacting sequence (UIS) element. The segment at 346 to 376 (SEVSEEELKNSSGPVPTLPEGITVAYTVPKK) is linker. Phosphoserine occurs at positions 357 and 392. The UFC1-binding sequence (UFC) motif lies at 388 to 403 (DSGESLEDLMARMKKM).

The protein belongs to the ubiquitin-activating E1 family. UBA5 subfamily. In terms of assembly, homodimer; homodimerization is required for UFM1 activation. Interacts (via UIS motif) with UFM1; binds UFM1 via a trans-binding mechanism in which UFM1 interacts with distinct sites in both subunits of the UBA5 homodimer. Interacts (via C-terminus) with UFC1. Interacts (via UIS motif) with GABARAPL2 and, with lower affinity, with GABARAP and GABARAPL1.

It is found in the cytoplasm. The protein resides in the nucleus. Its subcellular location is the endoplasmic reticulum membrane. The protein localises to the golgi apparatus. E1-like enzyme which specifically catalyzes the first step in ufmylation. Activates UFM1 by first adenylating its C-terminal glycine residue with ATP, and thereafter linking this residue to the side chain of a cysteine residue in E1, yielding a UFM1-E1 thioester and free AMP. Activates UFM1 via a trans-binding mechanism, in which UFM1 interacts with distinct sites in both subunits of the UBA5 homodimer. Trans-binding also promotes stabilization of the UBA5 homodimer, and enhances ATP-binding. Transfer of UFM1 from UBA5 to the E2-like enzyme UFC1 also takes place using a trans mechanism. Ufmylation plays a key role in various processes, such as ribosome recycling, response to DNA damage, interferon response or reticulophagy (also called ER-phagy). Ufmylation is essential for erythroid differentiation of both megakaryocytes and erythrocytes. In Rattus norvegicus (Rat), this protein is Ubiquitin-like modifier-activating enzyme 5.